We begin with the raw amino-acid sequence, 1006 residues long: Transmembrane channel-like protein 5 (1006 aa).

Residues 1 to 289 (MSAYYRNNWS…DDPVGSLWGE (289 aa)) form a disordered region. Residues 1–458 (MSAYYRNNWS…YFNFLRWLLK (458 aa)) are Extracellular-facing. 3 stretches are compositionally biased toward polar residues: residues 20-30 (SGSQNRTQGYL), 50-59 (TRSNPYSVAS), and 76-101 (RSLS…SPDH). The segment covering 138 to 149 (AGSSSSGNYAGS) has biased composition (low complexity). Positions 239–250 (REPDYSDAENGH) are enriched in basic and acidic residues. A helical membrane pass occupies residues 459–479 (FNIFSFILNFSFIIIPQFTVA). Residues 480–485 (KKNTLQ) lie on the Cytoplasmic side of the membrane. A helical membrane pass occupies residues 486 to 508 (FTGLEFFTGVGYFRDTVMYYGFY). Residues 509–525 (TNSTIQHGNSGASYNMQ) are Extracellular-facing. A helical membrane pass occupies residues 526 to 546 (LAYIFTIGACLTTCFFSLLFS). Over 547 to 619 (MAKYFRNNFI…NQLLTRFSAY (73 aa)) the chain is Cytoplasmic. The helical transmembrane segment at 620–640 (MVAWVVSTGVAIACCAAVYYL) threads the bilayer. The Extracellular portion of the chain corresponds to 641 to 654 (AEYNLEFLKTHSNP). A helical membrane pass occupies residues 655 to 675 (GAVLLLPFVVSCINLAVPCIY). The Cytoplasmic portion of the chain corresponds to 676–698 (SMFRLVERYEMPRHEVYVLLIRN). The helical transmembrane segment at 699-719 (IFLKISIIGILCYYWLNTVAL) threads the bilayer. The Extracellular portion of the chain corresponds to 720 to 732 (SGEECWETLIGQD). The helical transmembrane segment at 733–753 (IYRLLLMDFVFSLVNSFLGEF) threads the bilayer. Residues 754–786 (LRRIIGMQLITSLGLQEFDIARNVLELIYAQTL) lie on the Cytoplasmic side of the membrane. Residues 787–807 (VWIGIFFCPLLPFIQMIMLFI) traverse the membrane as a helical segment. Topologically, residues 808–835 (MFYSKNISLMMNFQPPSKAWRASQMMTF) are extracellular. A helical membrane pass occupies residues 836 to 856 (FIFLLFFPSFTGVLCTLAITI). Over 857–900 (WRLKPSADCGPFRGLPLFIHSIYSWIDTLSTRPGYLWVVWIYRN) the chain is Cytoplasmic. Residues 901–921 (LIGSVHFFFILTLIVLIITYL) form a helical membrane-spanning segment. Topologically, residues 922-1006 (YWQITEGRKI…RSVQEGNPRA (85 aa)) are extracellular.

Belongs to the TMC family.

It is found in the membrane. Functionally, probable component of an ion channel. Molecular function hasn't been characterized yet. This is Transmembrane channel-like protein 5 from Homo sapiens (Human).